Consider the following 223-residue polypeptide: Cutinase (223 aa).

An N-terminal signal peptide occupies residues 1–19; the sequence is MKFFAFSMLIGEASPIVLA. An intrachain disulfide couples C46 to C124. S135 functions as the Nucleophile in the catalytic mechanism. A disulfide bond links C185 and C192. D189 is a catalytic residue. The Proton donor/acceptor role is filled by H202.

It belongs to the cutinase family. The 2 disulfide bonds play a critical role in holding the catalytic residues in juxta-position; reduction of the disulfide bridges results in the complete inactivation of the enzyme.

It is found in the secreted. The enzyme catalyses cutin + H2O = cutin monomers.. Its function is as follows. Catalyzes the hydrolysis of complex carboxylic polyesters found in the cell wall of plants. Degrades cutin, a macromolecule that forms the structure of the plant cuticle. Allows pathogenic fungi to penetrate through the cuticular barrier into the host plant during the initial stage of fungal infection. The polypeptide is Cutinase (CUT) (Didymella rabiei (Chickpea ascochyta blight fungus)).